A 485-amino-acid chain; its full sequence is NADH-quinone oxidoreductase subunit N (485 aa).

The next 14 helical transmembrane spans lie at 8–28 (LIALLPLLIVGLTVVVVMLSI), 35–55 (FLNATLSVIGLNAALVSLWFV), 71–91 (GFAMLYTGLVLLASLATCTFA), 105–125 (FYLLVLIAALGGILLANANHL), 127–147 (SLFLGIELISLPLFGLVGYAF), 159–179 (YTILSAAASSFLLFGMALVYA), 203–223 (LLAGFGLMIVGLGFKLSLVPF), 235–255 (PAPVSTFLATASKIAIFGVVM), 271–291 (VVLAIIAFASIIFGNLMALSQ), 297–317 (LLGYSSISHLGYLLVALIALQ), 326–346 (VGVYLAGYLFSSLGAFGVVSL), 373–393 (AAVMTVMMLSLAGIPMTLGFI), 408–430 (WWLVGAVVVGSAIGLYYYLRVAV), and 455–475 (IVVLISALLVLVLGVWPQPLI).

This sequence belongs to the complex I subunit 2 family. NDH-1 is composed of 13 different subunits. Subunits NuoA, H, J, K, L, M, N constitute the membrane sector of the complex.

It is found in the cell inner membrane. It carries out the reaction a quinone + NADH + 5 H(+)(in) = a quinol + NAD(+) + 4 H(+)(out). NDH-1 shuttles electrons from NADH, via FMN and iron-sulfur (Fe-S) centers, to quinones in the respiratory chain. The immediate electron acceptor for the enzyme in this species is believed to be ubiquinone. Couples the redox reaction to proton translocation (for every two electrons transferred, four hydrogen ions are translocated across the cytoplasmic membrane), and thus conserves the redox energy in a proton gradient. In Escherichia coli (strain ATCC 8739 / DSM 1576 / NBRC 3972 / NCIMB 8545 / WDCM 00012 / Crooks), this protein is NADH-quinone oxidoreductase subunit N.